Here is a 216-residue protein sequence, read N- to C-terminus: Cytochrome c-type protein Cgr1 (216 aa).

A helical transmembrane segment spans residues Trp-18–Val-38. The heme site is built by Cys-46, Cys-50, His-51, Cys-95, Cys-98, His-99, Cys-142, Cys-147, His-148, Cys-176, Cys-179, His-180, Cys-190, Cys-193, and His-194.

The protein belongs to the multiheme cytochrome c family. May form a membrane-associated complex with Cgr2. In terms of processing, binds 5 heme groups per subunit.

It is found in the cell membrane. Probably transfers electrons from a membrane-associated electron donor (e.g. the membrane quinone pool) to the [4Fe-4S] cluster of the Cgr2 reductase via its covalently bound heme groups. The polypeptide is Cytochrome c-type protein Cgr1 (Eggerthella lenta (strain ATCC 25559 / DSM 2243 / CCUG 17323 / JCM 9979 / KCTC 3265 / NCTC 11813 / VPI 0255 / 1899 B) (Eubacterium lentum)).